A 236-amino-acid polypeptide reads, in one-letter code: 2,3,4,5-tetrahydropyridine-2,6-dicarboxylate N-acetyltransferase (236 aa).

It belongs to the transferase hexapeptide repeat family. DapH subfamily.

The catalysed reaction is (S)-2,3,4,5-tetrahydrodipicolinate + acetyl-CoA + H2O = L-2-acetamido-6-oxoheptanedioate + CoA. Its pathway is amino-acid biosynthesis; L-lysine biosynthesis via DAP pathway; LL-2,6-diaminopimelate from (S)-tetrahydrodipicolinate (acetylase route): step 1/3. Functionally, catalyzes the transfer of an acetyl group from acetyl-CoA to tetrahydrodipicolinate. This chain is 2,3,4,5-tetrahydropyridine-2,6-dicarboxylate N-acetyltransferase, found in Geobacillus thermodenitrificans (strain NG80-2).